Here is a 434-residue protein sequence, read N- to C-terminus: uncharacterized protein (434 aa).

Helical transmembrane passes span 27–47 (IFLL…QSVI), 64–84 (FYLS…FVNW), 244–264 (IILA…ATVL), 289–309 (VPVN…PSLL), and 387–407 (LILT…GAVF).

It belongs to the CbiQ family.

Its subcellular location is the cell membrane. This is an uncharacterized protein from Mycoplasma pneumoniae (strain ATCC 29342 / M129 / Subtype 1) (Mycoplasmoides pneumoniae).